The primary structure comprises 1241 residues: Phosphorylase b kinase regulatory subunit alpha, skeletal muscle isoform (1241 aa).

Ser-629, Ser-730, Ser-736, Ser-739, Ser-759, Ser-812, Ser-973, Ser-982, and Ser-986 each carry phosphoserine. Residues 811–841 (LSELYVKVGEIRHWGLIRYISGILRKKVEAL) are calmodulin-binding. Ser-1008 carries the phosphoserine; by autocatalysis modification. Position 1019 is a phosphoserine; by PKA (Ser-1019). Phosphoserine is present on residues Ser-1021 and Ser-1024. Residues 1064-1104 (SKDSRQGQWQRRRRLDGALNRVPIGFYQKVWKILQKCHGLS) are calmodulin-binding. Ser-1131 carries the post-translational modification Phosphoserine. Cys-1238 carries the S-farnesyl cysteine lipid modification.

This sequence belongs to the phosphorylase b kinase regulatory chain family. As to quaternary structure, hexadecamer of 4 heterotetramers, each composed of alpha, beta, gamma, and delta subunits. Alpha (PHKA1 or PHKA2) and beta (PHKB) are regulatory subunits, gamma (PHKG1 or PHKG2) is the catalytic subunit, and delta is calmodulin. Post-translationally, although the final Cys may be farnesylated, the terminal tripeptide is probably not removed, and the C-terminus is not methylated. In terms of tissue distribution, both isoforms are expressed in muscle.

It localises to the cell membrane. The protein operates within glycan biosynthesis; glycogen metabolism. Its activity is regulated as follows. By phosphorylation of various serine residues and by calcium. Its function is as follows. Phosphorylase b kinase catalyzes the phosphorylation of serine in certain substrates, including troponin I. The alpha chain may bind calmodulin. The chain is Phosphorylase b kinase regulatory subunit alpha, skeletal muscle isoform (Phka1) from Mus musculus (Mouse).